The sequence spans 95 residues: MAFKFNAEVRTAQGKGASRRLRHNGQIPAIVYGGSEAPVSIVLNHDELNNAQVHDSFYSDVITLVIDGKEVAVKVQAMQRHPFKPKLVHIDFKRA.

This sequence belongs to the bacterial ribosomal protein bL25 family. As to quaternary structure, part of the 50S ribosomal subunit; part of the 5S rRNA/L5/L18/L25 subcomplex. Contacts the 5S rRNA. Binds to the 5S rRNA independently of L5 and L18.

Its function is as follows. This is one of the proteins that binds to the 5S RNA in the ribosome where it forms part of the central protuberance. This Actinobacillus succinogenes (strain ATCC 55618 / DSM 22257 / CCUG 43843 / 130Z) protein is Large ribosomal subunit protein bL25.